The primary structure comprises 397 residues: Inositol 3-kinase (397 aa).

Residues Ser228, 278–281 (GAGD), and Asn305 contribute to the ATP site. The Proton acceptor role is filled by Asp281.

The protein belongs to the carbohydrate kinase pfkB family. Expressed in roots, leaf blade shoots, leaf sheath shoots and panicles.

It carries out the reaction myo-inositol + ATP = 1D-myo-inositol 3-phosphate + ADP + H(+). Kinase that phosphorylates myo-inositol to produce multiple myo-inositol monophosphates. Participates in phytic acid biosynthesis in developing seeds. Phytic acid is the primary storage form of phosphorus in cereal grains and other plant seeds. This Oryza sativa subsp. japonica (Rice) protein is Inositol 3-kinase.